Reading from the N-terminus, the 448-residue chain is MEAPGEGPCSESQVIPVLEEDPVDYGCEMQLLQDGAQLQLQLQPEEFVAIADYTATDETQLSFLRGEKILILRQTTADWWWGERAGCCGYIPANHLGKQLEEYDPEDTWQDEEYFDSYGTLKLHLEMLADQPRTTKYHSVILQNKESLKDKVILDVGCGTGIISLFCAHHARPKAVYAVEASDMAQHTSQLVLQNGFADTITVFQQKVEDVVLPEKVDVLVSEWMGTCLLFEFMIESILYARDTWLKGDGIIWPTTAALHLVPCSAEKDYHSKVLFWDNAYEFNLSALKSLAIKEFFSRPKSNHILKPEDCLSEPCTILQLDMRTVQVPDLETMRGELRFDIQKAGTLHGFTAWFSVYFQSLEEGQPQQVVSTGPLHPTTHWKQTLFMMDDPVPVHTGDVVHGFCCVTKKSGMEKAHVCLSELGCHVRTRSHVSTELETGSFRSGGDS.

2 interaction with ESR1 regions span residues 1 to 289 and 145 to 287; these read MEAP…SALK and KESL…NLSA. The 60-residue stretch at 42–101 folds into the SH3 domain; the sequence is LQPEEFVAIADYTATDETQLSFLRGEKILILRQTTADWWWGERAGCCGYIPANHLGKQLE. 2 positions are modified to asymmetric dimethylarginine: arginine 73 and arginine 84. The interaction with RB1 stretch occupies residues 95–219; that stretch reads HLGKQLEEYD…DVVLPEKVDV (125 aa). Residues 111–414 form the SAM-dependent MTase PRMT-type domain; the sequence is DEEYFDSYGT…CCVTKKSGME (304 aa). Residues histidine 124, arginine 133, glycine 157, glutamate 180, and glutamate 209 each contribute to the S-adenosyl-L-methionine site. Residues glutamate 223 and glutamate 232 contribute to the active site.

It belongs to the class I-like SAM-binding methyltransferase superfamily. Protein arginine N-methyltransferase family. As to quaternary structure, self-associates. Interacts with HNRNPUL1. Interacts with NFKBIA. Interacts with NCOA6 coactivator. Interacts (via SH3 domain) with PRMT8. Interacts with AR. Interacts with ESR1, ESR2, PGR, PPARG, RARA, RXRA and THRB. Interacts with RB1 and E2F1. As to expression, expressed in liver, pancreas, lung, brain, skeletal muscle, heart, muscle and fat.

The protein resides in the cytoplasm. The protein localises to the nucleus. It carries out the reaction L-arginyl-[protein] + 2 S-adenosyl-L-methionine = N(omega),N(omega)-dimethyl-L-arginyl-[protein] + 2 S-adenosyl-L-homocysteine + 2 H(+). Its function is as follows. Arginine methyltransferase that methylates the guanidino nitrogens of arginyl residues in proteins such as STAT3, FBL, histone H4. May inhibit NF-kappa-B transcription, and promote apoptosis. Represses E2F1 transcriptional activity (in a RB1-dependent manner). Has a negative regulation effect on G1 to S transition of mitotic cell cycle. Involved in growth regulation. Acts as a coactivator (with NCOA2) of the androgen receptor (AR)-mediated transactivation. Acts as a coactivator (with estrogen) of estrogen receptor (ER)-mediated transactivation. Enhances PGR, PPARG, RARA-mediated transactivation. The polypeptide is Protein arginine N-methyltransferase 2 (Prmt2) (Mus musculus (Mouse)).